A 334-amino-acid chain; its full sequence is Glucosyltransferase 3 (334 aa).

Residues Thr-16, Arg-179, and 249 to 254 (SHKSAT) each bind UDP.

This sequence belongs to the Gtf3 glucosyltransferase family. Homotetramer; a dimer of dimers.

It functions in the pathway protein modification; protein glycosylation. Required for polymorphic O-glycosylation of the serine-rich repeat protein in this bacteria. Catalyzes the second step in glycosylation by transferring glucose from UDP-glucose to the terminal GlcNAc moiety of the 3-O-(N-acetyl-alpha-D-glucosaminyl)-L-seryl-[protein] resulting from the first glycosylation step. Its function is as follows. Part of the accessory SecA2/SecY2 system specifically required to export GspB, a serine-rich repeat cell wall protein encoded upstream in the same operon. In Streptococcus gordonii, this protein is Glucosyltransferase 3.